Here is a 438-residue protein sequence, read N- to C-terminus: Aspartate--tRNA(Asp) ligase (438 aa).

Glu170 provides a ligand contact to L-aspartate. The tract at residues 192–195 (QLYK) is aspartate. Arg214 is a binding site for L-aspartate. Residues 214 to 216 (RAE), 222 to 224 (RHL), and Glu361 contribute to the ATP site. Mg(2+) is bound by residues Glu361 and Ser364. Positions 364 and 368 each coordinate L-aspartate. Position 409–412 (409–412 (GAER)) interacts with ATP.

It belongs to the class-II aminoacyl-tRNA synthetase family. Type 2 subfamily. As to quaternary structure, homodimer. It depends on Mg(2+) as a cofactor.

It localises to the cytoplasm. It catalyses the reaction tRNA(Asp) + L-aspartate + ATP = L-aspartyl-tRNA(Asp) + AMP + diphosphate. Functionally, catalyzes the attachment of L-aspartate to tRNA(Asp) in a two-step reaction: L-aspartate is first activated by ATP to form Asp-AMP and then transferred to the acceptor end of tRNA(Asp). This Pyrococcus abyssi (strain GE5 / Orsay) protein is Aspartate--tRNA(Asp) ligase.